Reading from the N-terminus, the 59-residue chain is Large ribosomal subunit protein uL30 (59 aa).

It belongs to the universal ribosomal protein uL30 family. Part of the 50S ribosomal subunit.

The protein is Large ribosomal subunit protein uL30 of Rhodococcus erythropolis (strain PR4 / NBRC 100887).